Consider the following 111-residue polypeptide: Large ribosomal subunit protein uL23 (111 aa).

Belongs to the universal ribosomal protein uL23 family. Part of the 50S ribosomal subunit. Contacts protein L29, and trigger factor when it is bound to the ribosome.

Its function is as follows. One of the early assembly proteins it binds 23S rRNA. One of the proteins that surrounds the polypeptide exit tunnel on the outside of the ribosome. Forms the main docking site for trigger factor binding to the ribosome. This is Large ribosomal subunit protein uL23 from Chlamydia trachomatis serovar A (strain ATCC VR-571B / DSM 19440 / HAR-13).